The following is a 205-amino-acid chain: Protein N-terminal glutamine amidohydrolase (205 aa).

Active-site residues include Cys-20, His-74, and Asp-90.

Belongs to the NTAQ1 family. Monomer.

The catalysed reaction is N-terminal L-glutaminyl-[protein] + H2O = N-terminal L-glutamyl-[protein] + NH4(+). Its function is as follows. Mediates the side-chain deamidation of N-terminal glutamine residues to glutamate, an important step in N-end rule pathway of protein degradation. Conversion of the resulting N-terminal glutamine to glutamate renders the protein susceptible to arginylation, polyubiquitination and degradation as specified by the N-end rule. Does not act on substrates with internal or C-terminal glutamine and does not act on non-glutamine residues in any position. In Drosophila willistoni (Fruit fly), this protein is Protein N-terminal glutamine amidohydrolase (tun).